The primary structure comprises 764 residues: MPMTTIAPEQVNRIVWNQHHDPFEILGSHPIEQNGKNVWVVRAYLPNASAAWVVLPEQRQEYAMQTVHDPHFFECIIETSELSNYQLKTKEGEHERVSYDPYAFRSPRLTDFDLHLFAEGNHHRIYEKLGAHFTEVDGVTGVYFAVWAPNARNVSVLGDFNLWDGRKHQMRKGATGVWELFIPEIGVGEHYKYEIKNFAGHIYEKSDPFGFQQEPRPKTASIVSNLNSYNWSDENWLEQRRHTDPLTQPISVYEVHLGSWLHAASAEPAKLPNGETEPVVIASELNPGARFLTYRELASRLIPYVKELGYTHIELLPIAEHPFDGSWGYQVTGYYAPTSRFGTPEDFMYFVDQCHQNNIGVIVDWVPGHFPKDGHGLAFFDGTHLYEHADSRKGEHKEWGTLVFNYSRNEVRNFLVANALFWFDKYHIDGIRVDAVASMLYLDYCRKEGEWLPNQYGGRENLEAADFLRQVNHLLFSYFPGVLSIAEESTDWPMVSWPTYTGGLGFNLKWNMGWMHDMLDYFSMDPWFRQFHQNNVTFSMWYNHSENFMLALSHDEVVHGKSNIIGKMPGDKWQKLANVRCLFAYMFAHPGKKTMFMSMEFGQWSEWNVWADLEWPLLQFEPHQQLKKFFTELNKLYRSEPALYTLDFAREGFDWIDCSDNRHSVVSFIRREKDTENFVVVVCNFTPQPHSHYRIGVPEKGFYTELFNSDARQYGGSNMGNLGGKWTDDWSMHSRPYSLDLCLPPLGVLILKMDKEKTAKASGS.

The active-site Nucleophile is Asp-434. The active-site Proton donor is Glu-487.

Belongs to the glycosyl hydrolase 13 family. GlgB subfamily. In terms of assembly, monomer.

It catalyses the reaction Transfers a segment of a (1-&gt;4)-alpha-D-glucan chain to a primary hydroxy group in a similar glucan chain.. Its pathway is glycan biosynthesis; glycogen biosynthesis. Catalyzes the formation of the alpha-1,6-glucosidic linkages in glycogen by scission of a 1,4-alpha-linked oligosaccharide from growing alpha-1,4-glucan chains and the subsequent attachment of the oligosaccharide to the alpha-1,6 position. This Trichormus variabilis (strain ATCC 29413 / PCC 7937) (Anabaena variabilis) protein is 1,4-alpha-glucan branching enzyme GlgB.